A 229-amino-acid polypeptide reads, in one-letter code: Translin (229 aa).

The DNA/RNA binding stretch occupies residues 86-90 (RFHEH). A leucine-zipper region spans residues 177-198 (LDSGFRLLNLKNDSLRKRYDGL).

It belongs to the translin family. As to quaternary structure, ring-shaped heterooctamer of six TSN and two TSNAX subunits, DNA/RNA binding occurs inside the ring.

Its subcellular location is the cytoplasm. It is found in the nucleus. In terms of biological role, exhibits both single-stranded and double-stranded endoribonuclease activity. May act as an activator of RNA-induced silencing complex (RISC) by facilitating endonucleolytic cleavage of the siRNA passenger strand. Its function is as follows. DNA-binding protein that specifically recognizes consensus sequences at the breakpoint junctions in chromosomal translocations, mostly involving immunoglobulin (Ig)/T-cell receptor gene segments. Seems to recognize single-stranded DNA ends generated by staggered breaks occurring at recombination hot spots. The chain is Translin (TSN) from Gallus gallus (Chicken).